The primary structure comprises 67 residues: Probable tautomerase K2 (67 aa).

The active-site Proton acceptor; via imino nitrogen is proline 2.

Belongs to the 4-oxalocrotonate tautomerase family.

This Dickeya dadantii (strain 3937) (Erwinia chrysanthemi (strain 3937)) protein is Probable tautomerase K2.